Consider the following 123-residue polypeptide: Ribosome-binding factor A (123 aa).

Belongs to the RbfA family. As to quaternary structure, monomer. Binds 30S ribosomal subunits, but not 50S ribosomal subunits or 70S ribosomes.

It is found in the cytoplasm. Its function is as follows. One of several proteins that assist in the late maturation steps of the functional core of the 30S ribosomal subunit. Associates with free 30S ribosomal subunits (but not with 30S subunits that are part of 70S ribosomes or polysomes). Required for efficient processing of 16S rRNA. May interact with the 5'-terminal helix region of 16S rRNA. The chain is Ribosome-binding factor A from Dechloromonas aromatica (strain RCB).